Consider the following 1483-residue polypeptide: Cystic fibrosis transmembrane conductance regulator (1483 aa).

Residues 1 to 77 (MQRSPLEKAS…KLINALRRCF (77 aa)) lie on the Cytoplasmic side of the membrane. The helical transmembrane segment at 78 to 98 (FWRFAFYGILLYLGEVTKAVQ) threads the bilayer. In terms of domain architecture, ABC transmembrane type-1 1 spans 81-365 (FAFYGILLYL…WAVQTWYDSL (285 aa)). At 99–122 (PLLLGRIIASYDPDNKQERSIAIY) the chain is on the extracellular side. A helical membrane pass occupies residues 123-146 (LAIGLCLLFIMRPLLLHPAIFGLH). Residues 147–195 (HIGMQIRIAMFSLIYKKTLKLSSRVLDKISIGQLVSLLSNNLNKFDEGL) are Cytoplasmic-facing. The chain crosses the membrane as a helical span at residues 196 to 216 (ALAHFVWIAPLQVTLLMGLLW). Residues 217 to 222 (DLLQAS) lie on the Extracellular side of the membrane. A helical membrane pass occupies residues 223–243 (AFCGLAFLIVLALVQAGLGRM). At 244-298 (IMKYRDQRAGKINERLVITSEVIENIQSVKAYCWEEAMEKIIENIRQTELKLTRK) the chain is on the cytoplasmic side. The chain crosses the membrane as a helical span at residues 299 to 319 (AAHVRYFNSSAFFFSGFFVVS). The Extracellular segment spans residues 320–339 (LSVLPYALIKTIILRKIFTT). Residues 340–358 (ISFCIVLRMAVTRQFPWAV) form a helical membrane-spanning segment. Residues 359–859 (QTWYDSLGAI…YLRYITVHKN (501 aa)) lie on the Cytoplasmic side of the membrane. ATP is bound by residues Trp401, Ser434, 458 to 465 (GSTGAGKT), and Gln493. The 224-residue stretch at 423–646 (NGDNSLFFSN…RPDFSSKLMG (224 aa)) folds into the ABC transporter 1 domain. Cys524 is lipidated: S-palmitoyl cysteine. Phosphoserine is present on residues Ser549 and Ser660. The segment at 654–832 (SPERRNSIIT…EEINEEDLKE (179 aa)) is disordered R region. Ser670 is subject to Phosphoserine; by PKA. Ser686 carries the phosphoserine modification. Lys688 participates in a covalent cross-link: Glycyl lysine isopeptide (Lys-Gly) (interchain with G-Cter in ubiquitin). Phosphoserine is present on residues Ser700 and Ser712. At Thr717 the chain carries Phosphothreonine. 5 positions are modified to phosphoserine: Ser737, Ser768, Ser791, Ser796, and Ser814. Residues 860–880 (LIFVLIWCLVIFLAEVAVSLV) form a helical membrane-spanning segment. The 297-residue stretch at 860–1156 (LIFVLIWCLV…AVNSSIEVDS (297 aa)) folds into the ABC transmembrane type-1 2 domain. The Extracellular segment spans residues 881-919 (VLWILRNLSSQDKGNSTQSVNSSYAVIFTSTSAYYIFYI). N-linked (GlcNAc...) asparagine glycans are attached at residues Asn887, Asn895, and Asn901. A discontinuously helical transmembrane segment spans residues 920–940 (YVGVADTLLALGLFRGLPLVH). The Cytoplasmic portion of the chain corresponds to 941 to 991 (TLITVSKILHHKMLHSVLQAPMSTLNTLKAGGILNRFSKDIAILDDLLPLT). The chain crosses the membrane as a helical span at residues 992–1012 (IFDFIQLLLIVIGAVAVVSVL). Residues 1013–1014 (QP) lie on the Extracellular side of the membrane. A helical membrane pass occupies residues 1015–1035 (YIFLATVPVIAAFIILRAYFL). Residues 1036–1096 (HTSQQLKQLE…TANWFLYLST (61 aa)) lie on the Cytoplasmic side of the membrane. The chain crosses the membrane as a helical span at residues 1097-1117 (LRWFQMRMEIIFVIFFIAVTF). At 1118–1131 (ISILTTGEGEGTVG) the chain is on the extracellular side. A helical membrane pass occupies residues 1132 to 1152 (IILTLAMNIMGTLQWAVNSSI). Residues 1153–1483 (EVDSLMRSVS…TEDEVQDTRL (331 aa)) lie on the Cytoplasmic side of the membrane. An ABC transporter 2 domain is found at 1213–1446 (MTVKDLTAKY…RSAFRQAIGP (234 aa)). ATP-binding positions include Tyr1222 and 1247–1254 (GRTGSGKS). An interaction with GORASP2 region spans residues 1389–1483 (RTLKQAFADC…TEDEVQDTRL (95 aa)). Cys1398 carries S-palmitoyl cysteine lipidation. The disordered stretch occupies residues 1444 to 1483 (IGPPERPGLLPHRLSSRQRSPSRIAALKEETEDEVQDTRL). Ser1459 bears the Phosphoserine mark. Residues 1473 to 1483 (ETEDEVQDTRL) are compositionally biased toward acidic residues. The short motif at 1481–1483 (TRL) is the PDZ-binding element.

Belongs to the ABC transporter superfamily. ABCC family. CFTR transporter (TC 3.A.1.202) subfamily. As to quaternary structure, monomer; does not require oligomerization for channel activity. May form oligomers in the membrane. Interacts with SLC26A3, SLC26A6 and NHERF1. Interacts with SHANK2. Interacts with MYO6. Interacts (via C-terminus) with GOPC (via PDZ domain); this promotes CFTR internalization and thereby decreases channel activity. Interacts with SLC4A7 through NHERF1. Found in a complex with MYO5B and RAB11A. Interacts with ANO1. Interacts with SLC26A8. Interacts with AHCYL1; the interaction increases CFTR activity. Interacts with CSE1L. The core-glycosylated form interacts with GORASP2 (via PDZ GRASP-type 1 domain) in respone to ER stress. Interacts with MARCHF2; the interaction leads to CFTR ubiqtuitination and degradation. Interacts with ADGRG2. In terms of processing, N-glycosylated. Phosphorylated; cAMP treatment promotes phosphorylation and activates the channel. Dephosphorylation decreases the ATPase activity (in vitro). Phosphorylation at PKA sites activates the channel. Phosphorylation at PKC sites enhances the response to phosphorylation by PKA. Phosphorylated by AMPK; this inhibits channel activity. Post-translationally, ubiquitinated, leading to its degradation in the lysosome. Deubiquitination by USP10 in early endosomes enhances its endocytic recycling to the cell membrane. Ubiquitinated by RNF185 during ER stress. Ubiquitinated by MARCHF2.

Its subcellular location is the apical cell membrane. The protein localises to the early endosome membrane. The protein resides in the cell membrane. It is found in the recycling endosome membrane. It localises to the endoplasmic reticulum membrane. Its subcellular location is the nucleus. It carries out the reaction ATP + H2O + closed Cl(-) channel = ADP + phosphate + open Cl(-) channel.. The enzyme catalyses chloride(in) = chloride(out). It catalyses the reaction hydrogencarbonate(in) = hydrogencarbonate(out). The catalysed reaction is ATP + H2O = ADP + phosphate + H(+). Epithelial ion channel that plays an important role in the regulation of epithelial ion and water transport and fluid homeostasis. Mediates the transport of chloride ions across the cell membrane. Possesses an intrinsic ATPase activity and utilizes ATP to gate its channel; the passive flow of anions through the channel is gated by cycles of ATP binding and hydrolysis by the ATP-binding domains. The ion channel is also permeable to HCO(3)(-); selectivity depends on the extracellular chloride concentration. Exerts its function also by modulating the activity of other ion channels and transporters. Contributes to the regulation of the pH and the ion content of the epithelial fluid layer. Modulates the activity of the epithelial sodium channel (ENaC) complex, in part by regulating the cell surface expression of the ENaC complex. May regulate bicarbonate secretion and salvage in epithelial cells by regulating the transporter SLC4A7. Can inhibit the chloride channel activity of ANO1. Plays a role in the chloride and bicarbonate homeostasis during sperm epididymal maturation and capacitation. The polypeptide is Cystic fibrosis transmembrane conductance regulator (Canis lupus familiaris (Dog)).